Consider the following 400-residue polypeptide: Octopine dehydrogenase (400 aa).

Residues 10-13 (GGNG) and 35-38 (FADE) contribute to the NADH site. 2 residues coordinate pyruvate: Gln118 and Thr143. Gln118 serves as a coordination point for substrate. An NAD(+)-binding site is contributed by Cys148. Met206 serves as a coordination point for L-arginine. Position 212 (His212) interacts with pyruvate. His212 is a catalytic residue. NAD(+) is bound at residue Arg324.

This sequence belongs to the lysopine/nopaline/octopine/opine/vitopine dehydrogenases family.

The catalysed reaction is D-octopine + NAD(+) + H2O = L-arginine + pyruvate + NADH + H(+). Catalyzes the reverse reaction of octopine dehydrogenation. Acts on L-arginine in preference to other substrates. The chain is Octopine dehydrogenase from Mizuhopecten yessoensis (Japanese scallop).